Consider the following 1015-residue polypeptide: Probable beta-galactosidase B (1015 aa).

An N-terminal signal peptide occupies residues 1 to 20 (MAHIYRLLLLLLSNLWFSTA). The N-linked (GlcNAc...) asparagine glycan is linked to Asn-23. Position 90 (Tyr-90) interacts with substrate. Residues Asn-99 and Asn-100 are each glycosylated (N-linked (GlcNAc...) asparagine). Positions 135, 136, and 137 each coordinate substrate. N-linked (GlcNAc...) asparagine glycosylation occurs at Asn-172. A substrate-binding site is contributed by Asn-195. Glu-196 serves as the catalytic Proton donor. An N-linked (GlcNAc...) asparagine glycan is attached at Asn-211. Position 265 (Tyr-265) interacts with substrate. The cysteines at positions 271 and 324 are disulfide-linked. The active-site Nucleophile is the Glu-308. Tyr-373 contributes to the substrate binding site. Residues Asn-411, Asn-456, Asn-554, Asn-679, Asn-735, Asn-775, and Asn-821 are each glycosylated (N-linked (GlcNAc...) asparagine).

It belongs to the glycosyl hydrolase 35 family.

It localises to the secreted. It carries out the reaction Hydrolysis of terminal non-reducing beta-D-galactose residues in beta-D-galactosides.. Its function is as follows. Cleaves beta-linked terminal galactosyl residues from gangliosides, glycoproteins, and glycosaminoglycans. This is Probable beta-galactosidase B (lacB) from Aspergillus fumigatus (strain CBS 144.89 / FGSC A1163 / CEA10) (Neosartorya fumigata).